The primary structure comprises 189 residues: Elongation factor P (189 aa).

It belongs to the elongation factor P family.

The protein resides in the cytoplasm. The protein operates within protein biosynthesis; polypeptide chain elongation. Involved in peptide bond synthesis. Stimulates efficient translation and peptide-bond synthesis on native or reconstituted 70S ribosomes in vitro. Probably functions indirectly by altering the affinity of the ribosome for aminoacyl-tRNA, thus increasing their reactivity as acceptors for peptidyl transferase. The protein is Elongation factor P of Campylobacter jejuni subsp. doylei (strain ATCC BAA-1458 / RM4099 / 269.97).